A 1088-amino-acid polypeptide reads, in one-letter code: Protein argonaute 18 (1088 aa).

The interval 1-220 (MASRGGGQHQ…QPPPDLPQAP (220 aa)) is disordered. Composition is skewed to gly residues over residues 20–30 (GGYGRGGGGGR), 51–86 (YPGG…GQGR), 95–127 (GRGY…GGYH), 135–148 (GRGG…GGGY), 161–182 (ARGG…YGRG), and 191–206 (GRGG…GGGS). Over residues 211–220 (QPPPDLPQAP) the composition is skewed to pro residues. Residues 477-574 (TVGYFLNNYG…LPMELCNIVP (98 aa)) form the PAZ domain. In terms of domain architecture, Piwi spans 747 to 1056 (LLLVVMTDDK…LAFRARFYLT (310 aa)).

It belongs to the argonaute family. Ago subfamily.

Functionally, probably involved in the RNA silencing pathway. May bind to short RNAs such as microRNAs (miRNAs) or short interfering RNAs (siRNAs), and represses the translation of mRNAs which are complementary to them. The polypeptide is Protein argonaute 18 (AGO18) (Oryza sativa subsp. japonica (Rice)).